A 40-amino-acid chain; its full sequence is Cytochrome b6-f complex subunit 5 (40 aa).

A helical membrane pass occupies residues 5 to 25; it reads ILLGMVLGFVPVTIAGLLVAA.

It belongs to the PetG family. As to quaternary structure, the 4 large subunits of the cytochrome b6-f complex are cytochrome b6, subunit IV (17 kDa polypeptide, PetD), cytochrome f and the Rieske protein, while the 4 small subunits are PetG, PetL, PetM and PetN. The complex functions as a dimer.

Its subcellular location is the cell inner membrane. In terms of biological role, component of the cytochrome b6-f complex, which mediates electron transfer between photosystem II (PSII) and photosystem I (PSI), cyclic electron flow around PSI, and state transitions. PetG is required for either the stability or assembly of the cytochrome b6-f complex. The chain is Cytochrome b6-f complex subunit 5 from Gloeobacter violaceus (strain ATCC 29082 / PCC 7421).